A 216-amino-acid polypeptide reads, in one-letter code: Ras-related protein Rab-11A (216 aa).

G2 bears the N-acetylglycine mark. S20, G21, V22, G23, K24, S25, N26, N37, L38, S40, S42, and T43 together coordinate GTP. Mg(2+) is bound at residue S25. The Switch 1 signature appears at 36–47 (FNLESKSTIGVE). T43 and D66 together coordinate Mg(2+). A Switch 2 motif is present at residues 67–86 (TAGQERYRAITSAYYRGAVG). The GTP site is built by G69, N124, K125, D127, A155, and L156. Residues 183–208 (DRRENDMSPSNNVVPIHVPPTTENKP) form a disordered region. Residues C212 and C213 are each lipidated (S-geranylgeranyl cysteine). C213 is modified (cysteine methyl ester). The propeptide at 214–216 (QNI) is removed in mature form.

It belongs to the small GTPase superfamily. Rab family. The cofactor is Mg(2+).

The protein resides in the cell membrane. The protein localises to the endosome membrane. It localises to the recycling endosome membrane. It is found in the cleavage furrow. Its subcellular location is the cytoplasmic vesicle. The protein resides in the phagosome. The protein localises to the cytoplasmic vesicle membrane. It localises to the golgi apparatus. It is found in the trans-Golgi network. The enzyme catalyses GTP + H2O = GDP + phosphate + H(+). Regulated by guanine nucleotide exchange factors (GEFs) which promote the exchange of bound GDP for free GTP. Regulated by GTPase activating proteins (GAPs) which increase the GTP hydrolysis activity. Inhibited by GDP dissociation inhibitors (GDIs) which prevent Rab-GDP dissociation. Functionally, the small GTPases Rab are key regulators of intracellular membrane trafficking, from the formation of transport vesicles to their fusion with membranes. Rabs cycle between an inactive GDP-bound form and an active GTP-bound form that is able to recruit to membranes different set of downstream effectors directly responsible for vesicle formation, movement, tethering and fusion. The small Rab GTPase RAB11A regulates endocytic recycling. May also be involved in the regulation of preciliary trafficking and neosynthesized protein export. In Gallus gallus (Chicken), this protein is Ras-related protein Rab-11A (RAB11A).